Here is a 308-residue protein sequence, read N- to C-terminus: Homogentisate phytyltransferase (308 aa).

Transmembrane regions (helical) follow at residues 13-33 (PHTIIGTTLSVWAVYLLTILG), 44-64 (LDLVFGAWLACLLGNVYIVGL), 104-124 (LAIAWGLGLWLGLTVGISLII), 142-162 (AALCILTVRGIVVNLGLFLFF), 173-193 (ITPIWVLTLFILVFTVAIAIF), 219-241 (VFRGTLILLTGCYLAMAIWGLWA), 245-263 (LNTAFLIVSHLCLLALLWW), and 279-299 (FYQFIWKLFFLEYLLYPLALW).

Belongs to the UbiA prenyltransferase family.

The protein resides in the membrane. The enzyme catalyses phytyl diphosphate + homogentisate + H(+) = 2-methyl-6-phytyl-1,4-benzene-1,4-diol + CO2 + diphosphate. It functions in the pathway cofactor biosynthesis; tocopherol biosynthesis. Involved in the synthesis of tocopherol (vitamin E). Catalyzes the condensation of homogentisate and phytyl diphosphate to form dimethylphytylhydrquinone. The protein is Homogentisate phytyltransferase of Synechocystis sp. (strain ATCC 27184 / PCC 6803 / Kazusa).